The following is a 201-amino-acid chain: UPF0637 protein LSEI_1198 (201 aa).

Belongs to the UPF0637 family.

This chain is UPF0637 protein LSEI_1198, found in Lacticaseibacillus paracasei (strain ATCC 334 / BCRC 17002 / CCUG 31169 / CIP 107868 / KCTC 3260 / NRRL B-441) (Lactobacillus paracasei).